Reading from the N-terminus, the 264-residue chain is 3-methyl-2-oxobutanoate hydroxymethyltransferase 2 (264 aa).

The Mg(2+) site is built by aspartate 44 and aspartate 83. Residues 44–45 (DS), aspartate 83, and lysine 111 each bind 3-methyl-2-oxobutanoate. Position 113 (glutamate 113) interacts with Mg(2+). Glutamate 180 acts as the Proton acceptor in catalysis.

The protein belongs to the PanB family. As to quaternary structure, homodecamer; pentamer of dimers. It depends on Mg(2+) as a cofactor.

Its subcellular location is the cytoplasm. The enzyme catalyses 3-methyl-2-oxobutanoate + (6R)-5,10-methylene-5,6,7,8-tetrahydrofolate + H2O = 2-dehydropantoate + (6S)-5,6,7,8-tetrahydrofolate. It functions in the pathway cofactor biosynthesis; (R)-pantothenate biosynthesis; (R)-pantoate from 3-methyl-2-oxobutanoate: step 1/2. Functionally, catalyzes the reversible reaction in which hydroxymethyl group from 5,10-methylenetetrahydrofolate is transferred onto alpha-ketoisovalerate to form ketopantoate. The chain is 3-methyl-2-oxobutanoate hydroxymethyltransferase 2 from Hahella chejuensis (strain KCTC 2396).